The following is a 252-amino-acid chain: Proteasome subunit alpha 1 (252 aa).

An N-acetylmethionine; alternate modification is found at Met1.

It belongs to the peptidase T1A family. The 20S proteasome core is composed of 14 alpha and 14 beta subunits that assemble into four stacked heptameric rings, resulting in a barrel-shaped structure. The two inner rings, each composed of seven catalytic beta subunits, are sandwiched by two outer rings, each composed of seven alpha subunits. H.volcanii produces at least 2 types of 20S proteasomes: an alpha1-beta proteasome and a proteasome containing all three subunits (alpha1, alpha2, and beta) that appears to be asymmetrical with homo-oligomeric alpha1 and alpha2 rings positioned on separate ends. The catalytic chamber with the active sites is on the inside of the barrel. Has probably a gated structure, the ends of the cylinder being occluded by the N-termini of the alpha-subunits. Is likely capped at one or both ends by the proteasome regulatory ATPase, PAN. In terms of processing, acetylated. The acetylated form at Met-1 was shown to be in 100-fold excess of the unacetylated form with the initiator methionine removed in whole cells and purified 20S proteasomes.

It is found in the cytoplasm. Its activity is regulated as follows. The formation of the proteasomal ATPase PAN-20S proteasome complex, via the docking of the C-termini of PAN into the intersubunit pockets in the alpha-rings, triggers opening of the gate for substrate entry. Interconversion between the open-gate and close-gate conformations leads to a dynamic regulation of the 20S proteasome proteolysis activity. In vitro, the chymotrypsin-like activity of the alpha1-beta proteasome is potently inhibited by carbobenzoxyl-leucinyl-leucinyl-leucinal-H (MG132) and significantly by N-acetyl-leucinyl-leucinyl-norleucinal-H (calpain inhibitor I). Component of the proteasome core, a large protease complex with broad specificity involved in protein degradation. The H.volcanii alpha1-beta proteasome is able to cleave oligopeptides after Phe, Tyr and Trp, poorly after Glu but not after Arg. Thus, displays chymotrypsin-like activity, low caspase-like activity but no trypsin-like activity. This Haloferax volcanii (strain ATCC 29605 / DSM 3757 / JCM 8879 / NBRC 14742 / NCIMB 2012 / VKM B-1768 / DS2) (Halobacterium volcanii) protein is Proteasome subunit alpha 1.